Consider the following 327-residue polypeptide: Annexin A8-like protein 1 (327 aa).

Annexin repeat units follow at residues 21–92 (FNPD…ALMY), 93–164 (PPYR…CLLQ), 177–249 (ALAL…TVVK), and 253–324 (NLHS…SLVG). Positions 266, 268, 270, and 310 each coordinate Ca(2+).

The protein belongs to the annexin family.

This is Annexin A8-like protein 1 from Homo sapiens (Human).